We begin with the raw amino-acid sequence, 246 residues long: DNA repair protein RecO (246 aa).

It belongs to the RecO family.

Its function is as follows. Involved in DNA repair and RecF pathway recombination. The chain is DNA repair protein RecO from Maridesulfovibrio salexigens (strain ATCC 14822 / DSM 2638 / NCIMB 8403 / VKM B-1763) (Desulfovibrio salexigens).